The following is a 341-amino-acid chain: MTEQQPVAVLGGGSFGTAVANLLAENGHPVRQWMRDPAQAESMRVNRENPRYLKGIRLHDGVQPVNDLLATLQGSELIFVALPSSALRSVLAPHAELLRGKGLVSLTKGIEAHTFKLMSQILEEIAPEARIGVLSGPNLAREIAEHALTATVVASEDEALCRQVQEVLHGRTFRVYASTDRFGVELGGALKNVYAIIAGMAVALGMGENTKSMLITRALAEMTRFAVSQGANPMTFLGLAGVGDLIVTCSSPKSRNYQVGHALGQGLTLEEAVSRLGEVAEGVNTLKVLKAKAQEVQVYMPLVAGLHAILFEGRTLNQVIEHLMRAEPKTDVDFISTSGFN.

NADPH contacts are provided by Ser14, Phe15, Arg35, and Lys108. Sn-glycerol 3-phosphate is bound by residues Lys108 and Gly136. NADPH is bound at residue Ala140. Sn-glycerol 3-phosphate-binding residues include Lys191, Asp244, Ser254, Arg255, and Asn256. The Proton acceptor role is filled by Lys191. Arg255 lines the NADPH pocket. Val279 and Glu281 together coordinate NADPH.

It belongs to the NAD-dependent glycerol-3-phosphate dehydrogenase family.

Its subcellular location is the cytoplasm. The enzyme catalyses sn-glycerol 3-phosphate + NAD(+) = dihydroxyacetone phosphate + NADH + H(+). It carries out the reaction sn-glycerol 3-phosphate + NADP(+) = dihydroxyacetone phosphate + NADPH + H(+). The protein operates within membrane lipid metabolism; glycerophospholipid metabolism. In terms of biological role, catalyzes the reduction of the glycolytic intermediate dihydroxyacetone phosphate (DHAP) to sn-glycerol 3-phosphate (G3P), the key precursor for phospholipid synthesis. This Pseudomonas entomophila (strain L48) protein is Glycerol-3-phosphate dehydrogenase [NAD(P)+].